A 255-amino-acid polypeptide reads, in one-letter code: Putative cysteine-rich repeat secretory protein 10 (255 aa).

An N-terminal signal peptide occupies residues 1–26 (MFSSSVSISILVVVAMQFSFIHNVLS). Gnk2-homologous domains are found at residues 33–134 (YLQH…EIYT) and 140–252 (FKHY…LYPF).

The protein belongs to the cysteine-rich repeat secretory protein family.

It is found in the secreted. The chain is Putative cysteine-rich repeat secretory protein 10 (CRRSP10) from Arabidopsis thaliana (Mouse-ear cress).